Reading from the N-terminus, the 122-residue chain is Large ribosomal subunit protein bL12 (122 aa).

The protein belongs to the bacterial ribosomal protein bL12 family. In terms of assembly, homodimer. Part of the ribosomal stalk of the 50S ribosomal subunit. Forms a multimeric L10(L12)X complex, where L10 forms an elongated spine to which 2 to 4 L12 dimers bind in a sequential fashion. Binds GTP-bound translation factors.

In terms of biological role, forms part of the ribosomal stalk which helps the ribosome interact with GTP-bound translation factors. Is thus essential for accurate translation. This chain is Large ribosomal subunit protein bL12, found in Buchnera aphidicola subsp. Acyrthosiphon pisum (strain Tuc7).